Consider the following 542-residue polypeptide: Membrane protein insertase YidC (542 aa).

Residues 6-26 (NILLIGLLFVSFLLWQQWQAD) form a helical membrane-spanning segment. The segment covering 32-41 (VAQTQSSVAP) has biased composition (polar residues). Positions 32–57 (VAQTQSSVAPSTVADAHSSDVPDADS) are disordered. A run of 5 helical transmembrane segments spans residues 326–346 (LVVD…LLMF), 350–370 (FVGN…GMLY), 421–441 (GGCL…WVLL), 458–478 (LSVQ…MFIM), and 501–521 (VIFT…WLVG).

It belongs to the OXA1/ALB3/YidC family. Type 1 subfamily. In terms of assembly, interacts with the Sec translocase complex via SecD. Specifically interacts with transmembrane segments of nascent integral membrane proteins during membrane integration.

The protein resides in the cell inner membrane. Required for the insertion and/or proper folding and/or complex formation of integral membrane proteins into the membrane. Involved in integration of membrane proteins that insert both dependently and independently of the Sec translocase complex, as well as at least some lipoproteins. Aids folding of multispanning membrane proteins. The protein is Membrane protein insertase YidC of Shewanella piezotolerans (strain WP3 / JCM 13877).